The chain runs to 346 residues: Cell division protein ZipA (346 aa).

The Periplasmic segment spans residues 1 to 6 (MEDLQL). A helical transmembrane segment spans residues 7–27 (VLFVLGAIAIVAVLVHGFWSI). At 28-346 (RRQQPKSLKD…DYLHRIRANA (319 aa)) the chain is on the cytoplasmic side. Disordered regions lie at residues 76 to 103 (ANEA…QPVE) and 121 to 145 (QPDF…RQEP).

Belongs to the ZipA family. Interacts with FtsZ via their C-terminal domains.

Its subcellular location is the cell inner membrane. In terms of biological role, essential cell division protein that stabilizes the FtsZ protofilaments by cross-linking them and that serves as a cytoplasmic membrane anchor for the Z ring. Also required for the recruitment to the septal ring of downstream cell division proteins. The protein is Cell division protein ZipA of Shewanella sp. (strain MR-7).